The following is a 397-amino-acid chain: Phosphoglycerate kinase (397 aa).

Substrate contacts are provided by residues 26 to 28 (DLN), Arg-42, 65 to 68 (HLGR), Arg-119, and Arg-152. Residues Lys-203, Glu-325, and 351–354 (GGDT) each bind ATP.

The protein belongs to the phosphoglycerate kinase family. Monomer.

The protein localises to the cytoplasm. It carries out the reaction (2R)-3-phosphoglycerate + ATP = (2R)-3-phospho-glyceroyl phosphate + ADP. Its pathway is carbohydrate degradation; glycolysis; pyruvate from D-glyceraldehyde 3-phosphate: step 2/5. The protein is Phosphoglycerate kinase of Bordetella pertussis (strain Tohama I / ATCC BAA-589 / NCTC 13251).